The primary structure comprises 362 residues: Forkhead box protein F (362 aa).

The segment at 19–70 is disordered; sequence LDSTAPNNSHRTIKAENYFNEDEEDYNENSHEDSEDSKEDSDGQGCRSRKRK. Over residues 37 to 57 the composition is skewed to acidic residues; the sequence is FNEDEEDYNENSHEDSEDSKE. A DNA-binding region (fork-head) is located at residues 72 to 169; sequence KPPFSYIALI…EENGFRRRPR (98 aa).

It is found in the nucleus. Transcription factor that is required for cell fate of coelomocytes which are non-muscle mesodermal cells. Acts in concert with, and by activating expression of, the homeodomain gene ceh-34. Binds to the sequence motif 5'-ATAAA[T/C]A-3'. The protein is Forkhead box protein F of Caenorhabditis elegans.